The primary structure comprises 103 residues: Small ribosomal subunit protein uS10 (103 aa).

Belongs to the universal ribosomal protein uS10 family. As to quaternary structure, part of the 30S ribosomal subunit.

In terms of biological role, involved in the binding of tRNA to the ribosomes. This Ralstonia pickettii (strain 12J) protein is Small ribosomal subunit protein uS10.